A 279-amino-acid polypeptide reads, in one-letter code: Oxygen-dependent coproporphyrinogen-III oxidase (279 aa).

Ser-102 is a binding site for substrate. Positions 106 and 116 each coordinate a divalent metal cation. Catalysis depends on His-116, which acts as the Proton donor. Substrate is bound at residue 118–120; that stretch reads NTR. Residues His-149 and His-179 each contribute to the a divalent metal cation site. Residues 244 to 279 are important for dimerization; sequence YVEFNLLYDRGTKFGLMTDGNIEAILMSLPPVVKFN.

It belongs to the aerobic coproporphyrinogen-III oxidase family. In terms of assembly, homodimer. Requires a divalent metal cation as cofactor.

It localises to the cytoplasm. It carries out the reaction coproporphyrinogen III + O2 + 2 H(+) = protoporphyrinogen IX + 2 CO2 + 2 H2O. It functions in the pathway porphyrin-containing compound metabolism; protoporphyrin-IX biosynthesis; protoporphyrinogen-IX from coproporphyrinogen-III (O2 route): step 1/1. Functionally, involved in the heme biosynthesis. Catalyzes the aerobic oxidative decarboxylation of propionate groups of rings A and B of coproporphyrinogen-III to yield the vinyl groups in protoporphyrinogen-IX. The sequence is that of Oxygen-dependent coproporphyrinogen-III oxidase from Rickettsia typhi (strain ATCC VR-144 / Wilmington).